The primary structure comprises 333 residues: Biotin synthase (333 aa).

The 230-residue stretch at 40-269 (YRVQLASLLS…HARVRLSAGR (230 aa)) folds into the Radical SAM core domain. [4Fe-4S] cluster contacts are provided by C55, C59, and C62. C100, C132, C192, and R264 together coordinate [2Fe-2S] cluster.

Belongs to the radical SAM superfamily. Biotin synthase family. As to quaternary structure, homodimer. It depends on [4Fe-4S] cluster as a cofactor. [2Fe-2S] cluster is required as a cofactor.

The enzyme catalyses (4R,5S)-dethiobiotin + (sulfur carrier)-SH + 2 reduced [2Fe-2S]-[ferredoxin] + 2 S-adenosyl-L-methionine = (sulfur carrier)-H + biotin + 2 5'-deoxyadenosine + 2 L-methionine + 2 oxidized [2Fe-2S]-[ferredoxin]. It functions in the pathway cofactor biosynthesis; biotin biosynthesis; biotin from 7,8-diaminononanoate: step 2/2. Its function is as follows. Catalyzes the conversion of dethiobiotin (DTB) to biotin by the insertion of a sulfur atom into dethiobiotin via a radical-based mechanism. This Synechococcus sp. (strain CC9902) protein is Biotin synthase.